A 672-amino-acid chain; its full sequence is Spermatid perinuclear RNA-binding protein (672 aa).

The DZF domain occupies 5 to 363 (RSFANDDRHV…ALKRPFEDGL (359 aa)). The interval 349–371 (GAGSSALKRPFEDGLGDDKDPNK) is disordered. Basic and acidic residues predominate over residues 357-371 (RPFEDGLGDDKDPNK). Residues 387-453 (DLMNALMRLN…AVKVLQAMGY (67 aa)) enclose the DRBM 1 domain. Residues 467–476 (DEKSDNESKN) show a composition bias toward basic and acidic residues. Residues 467-514 (DEKSDNESKNDTVSSNSSNNTGNSTTETSSTLEVRTQGPILTASGKNP) form a disordered region. A compositionally biased stretch (low complexity) spans 477 to 497 (DTVSSNSSNNTGNSTTETSST). A DRBM 2 domain is found at 510–576 (SGKNPVMELN…ALAALEKLFS (67 aa)). An asymmetric dimethylarginine mark is found at Arg612 and Arg617.

In terms of assembly, interacts with EIF2AK2. Associates with microtubules; it is unsure whether such interaction is direct or indirect. As to expression, isoform 2 is expressed in spermatocytes (at protein level). Expressed in testis, thymus, ovary, liver, kidney, heart, spleen and brain. Expressed in cortex, dentate gyrus and Purkinje cell layer and granule cells of the cerebellum.

It is found in the cytoplasm. Its subcellular location is the cytoskeleton. Its function is as follows. Involved in spermatogenesis and sperm function. Plays a role in regulation of cell growth. Binds to double-stranded DNA and RNA. Binds most efficiently to poly(I:C) RNA than to poly(dI:dC) DNA. Also binds to single-stranded poly(G) RNA. Binds non-specifically to the mRNA PRM1 3'-UTR and adenovirus VA RNA. The protein is Spermatid perinuclear RNA-binding protein (Strbp) of Mus musculus (Mouse).